The following is a 259-amino-acid chain: 5'-nucleotidase SurE (259 aa).

A divalent metal cation-binding residues include Asp8, Asp9, Ser40, and Asn92.

The protein belongs to the SurE nucleotidase family. A divalent metal cation serves as cofactor.

The protein resides in the cytoplasm. The enzyme catalyses a ribonucleoside 5'-phosphate + H2O = a ribonucleoside + phosphate. In terms of biological role, nucleotidase that shows phosphatase activity on nucleoside 5'-monophosphates. The polypeptide is 5'-nucleotidase SurE (Stenotrophomonas maltophilia (strain R551-3)).